Here is a 627-residue protein sequence, read N- to C-terminus: (-)-beta-pinene synthase 2, chloroplastic (627 aa).

Residues 1-51 (MDLISVLPSASKSCVCLHKPLSSSTHKLKPFCRKIRILGMPRPRKSVLMVS) constitute a chloroplast transit peptide. Positions 378, 382, and 530 each coordinate Mg(2+). A DDXXD motif motif is present at residues 378 to 382 (DDMYD).

Belongs to the terpene synthase family. Tpsd subfamily. Mg(2+) serves as cofactor. Mn(2+) is required as a cofactor.

Its subcellular location is the plastid. The protein localises to the chloroplast. The enzyme catalyses (2E)-geranyl diphosphate = (1S,5S)-beta-pinene + diphosphate. The catalysed reaction is (2E)-geranyl diphosphate = (1S,5S)-alpha-pinene + diphosphate. Its pathway is terpene metabolism; oleoresin biosynthesis. The protein operates within secondary metabolite biosynthesis; terpenoid biosynthesis. Functionally, monoterpene synthase (TPS) involved in the biosynthesis of monoterpene natural products included in conifer oleoresin secretions and volatile emissions; these compounds contribute to biotic and abiotic stress defense against herbivores and pathogens. Catalyzes the conversion of (2E)-geranyl diphosphate (GPP) to (-)-beta-pinene and, to a lower extent, to (-)-alpha-pinene. The chain is (-)-beta-pinene synthase 2, chloroplastic from Pinus banksiana (Jack pine).